Here is a 500-residue protein sequence, read N- to C-terminus: Glucose-1-phosphate adenylyltransferase small subunit 1, chloroplastic/amyloplastic (500 aa).

The transit peptide at 1–50 (MAMMAMGAASWAPIPAPARAAAAFYPGRDLAAARRRRGAAARRPFVFTPR) directs the protein to the chloroplast.

This sequence belongs to the bacterial/plant glucose-1-phosphate adenylyltransferase family. In terms of assembly, heterotetramer composed of two small and two large subunits. Expressed in leaves.

Its subcellular location is the plastid. It is found in the chloroplast. It localises to the amyloplast. The enzyme catalyses alpha-D-glucose 1-phosphate + ATP + H(+) = ADP-alpha-D-glucose + diphosphate. It participates in glycan biosynthesis; starch biosynthesis. Activated by 3'phosphoglycerate, inhibited by orthophosphate. Allosteric regulation. Involved in synthesis of starch. Catalyzes the synthesis of ADP-glucose, a molecule that serves as an activated glycosyl donor for alpha-1,4-glucan synthesis. Essential for starch synthesis in leaf chloroplasts and endosperm amyloplasts. The chain is Glucose-1-phosphate adenylyltransferase small subunit 1, chloroplastic/amyloplastic from Oryza sativa subsp. japonica (Rice).